The sequence spans 1244 residues: Superkiller complex protein 2 (1244 aa).

Positions 218–249 are disordered; that stretch reads LDLSGGDEDEGEAAGGPRGDNASPSPSGTPLV. Phosphoserine occurs at positions 242 and 253. One can recognise a Helicase ATP-binding domain in the interval 316-472; that stretch reads ILHLEQHDSV…WIGRLKRRQI (157 aa). 329-336 is an ATP binding site; the sequence is AHTSAGKT. The DEVH box signature appears at 420–423; the sequence is DEVH. One can recognise a Helicase C-terminal domain in the interval 582-752; it reads GLTSLDLTTS…LTYTMILNLL (171 aa).

Belongs to the helicase family. SKI2 subfamily. Component of the SKI complex which consists of SKIC2, SKIC3 and SKIC8. Interacts with HBS1L isoform 2.

The protein resides in the nucleus. It is found in the cytoplasm. The enzyme catalyses ATP + H2O = ADP + phosphate + H(+). Functionally, helicase component of the SKI complex, a multiprotein complex that assists the RNA-degrading exosome during the mRNA decay and quality-control pathways. The SKI complex catalyzes mRNA extraction from 80S ribosomal complexes in the 3'-5' direction and channels mRNA to the cytosolic exosome for degradation. SKI-mediated extraction of mRNA from stalled ribosomes allow binding of the Pelota-HBS1L complex and subsequent ribosome disassembly by ABCE1 for ribosome recycling. In the nucleus, the SKI complex associates with transcriptionally active genes in a manner dependent on PAF1 complex (PAF1C). This chain is Superkiller complex protein 2, found in Mus musculus (Mouse).